The primary structure comprises 319 residues: MISVARAMTDSDSLVVSTVDRNSDMKFIWPEKVYFRGCTHRSIPLLDDAAFNERMLCQDDLTLLKFGLDFFMRSTPFLKSFWLTEFGLVMVTDALTEYAMRIWRAINRVHLGDTDAPTVAEITRHINHLSGRTMMIPSIYSGPKNGQYPILNKMHELFTLFATGKISILNHEILPEAALLHEQTHDLLDRLTRDLPLFLEYEDGPRSDPFTHVDRLGKLRARGEVVMYACVEPTPVPRSVDLWEHMSEMYAESCYWLLQRETPRNMIALMDFIHVKTGYSTTTNELMGYMRDRTSTIDILAFLFELTAGDFTWNFWALV.

This is an uncharacterized protein from Ictalurid herpesvirus 1 (strain Auburn) (IcHV-1).